Consider the following 569-residue polypeptide: Cell death protein 4 (569 aa).

In terms of domain architecture, CARD spans 1–91 (MLCEIECRAL…HLKDFLDEYL (91 aa)). In terms of domain architecture, NB-ARC spans 116-442 (DRKLLLGNVP…IWSCVIPVDI (327 aa)). ATP is bound by residues phenylalanine 131, 162–167 (GSGKSV), and glutamine 171. Serine 166 contacts Mg(2+).

In terms of assembly, associates as an asymmetric homodimer with ced-9. Upon release from ced-9, forms an octamer, known as the apoptosome, and interacts with ced-3; the interaction results in ced-3 autoproteolytic cleavage and activation. The octamer (a tetramer of an asymmetric dimer) also interacts with two processed ced-3 to form a stable holoenzyme. Interacts with sex-determining protein fem-1. May form a complex composed of ced-3, ced-4 and mac-1 or of ced-9, ced-4 and mac-1. Within the complex, interacts with ced-4.

The protein resides in the mitochondrion. It localises to the cytoplasm. Its subcellular location is the perinuclear region. Functionally, plays a major role in programmed cell death (PCD, apoptosis). egl-1 binds to and directly inhibits the activity of ced-9, releasing the cell death activator ced-4 from a ced-9/ced-4 containing protein complex and allowing ced-4 to induce caspase ced-3 autoproteolytic cleavage and activation. Also forms a holoenzyme with processed ced-3 enhancing ced-3 activity. Component of the egl-1, ced-9, ced-4 and ced-3 apoptotic signaling cascade required for the initiation of programmed cell death in cells fated to die during embryonic and postembryonic development. During oogenesis, required for germline apoptosis downstream of ced-9 and upstream of ced-3 but independently of egl-1. May regulate germline apoptosis in response to DNA damage, probably downstream of let-60/ras and mpk-1 pathway. Regulates CEP neuron apoptosis in response to high Al(3+) levels. During male tail morphogenesis, promotes apoptosis of the tail-spike cell. During larval development, required for the elimination of transient presynaptic components downstream of egl-1 and ced-9 and upstream of ced-3 apoptotic pathway. Together with ain-1, a component of the miRNA-induced-silencing complex (miRISC), and probably upstream of ced-3, regulates temporal cell fate patterning during larval development. May play a role in resistance to S.typhimurium-mediated infection. This is Cell death protein 4 from Caenorhabditis briggsae.